We begin with the raw amino-acid sequence, 407 residues long: Divalent metal cation transporter MntH (407 aa).

Transmembrane regions (helical) follow at residues 16–36, 43–63, 95–115, 119–139, 152–172, 193–213, 239–259, 288–308, 318–338, 346–366, and 387–407; these read LTLL…GNFA, STFG…AMLV, WVQA…GAAV, LLLG…TWGI, FVVG…LVFS, AVYL…IYLH, IAMT…AAAF, LFGL…TLAG, FTIP…VVIA, ILVL…IPLL, and VGRL…VAMI.

The protein belongs to the NRAMP family.

The protein localises to the cell inner membrane. Its function is as follows. H(+)-stimulated, divalent metal cation uptake system. The sequence is that of Divalent metal cation transporter MntH from Aeromonas hydrophila subsp. hydrophila (strain ATCC 7966 / DSM 30187 / BCRC 13018 / CCUG 14551 / JCM 1027 / KCTC 2358 / NCIMB 9240 / NCTC 8049).